The primary structure comprises 189 residues: Probable nicotinate-nucleotide adenylyltransferase (189 aa).

Belongs to the NadD family.

The enzyme catalyses nicotinate beta-D-ribonucleotide + ATP + H(+) = deamido-NAD(+) + diphosphate. It functions in the pathway cofactor biosynthesis; NAD(+) biosynthesis; deamido-NAD(+) from nicotinate D-ribonucleotide: step 1/1. Catalyzes the reversible adenylation of nicotinate mononucleotide (NaMN) to nicotinic acid adenine dinucleotide (NaAD). In Exiguobacterium sibiricum (strain DSM 17290 / CCUG 55495 / CIP 109462 / JCM 13490 / 255-15), this protein is Probable nicotinate-nucleotide adenylyltransferase.